Here is a 1087-residue protein sequence, read N- to C-terminus: Band 4.1-like protein 3 (1087 aa).

At Met1 the chain carries N-acetylmethionine. The tract at residues 1-43 (MTTESGSDSESKPDQEAEPQEAAGAQGRAGAPVPEPPKEEQQQ) is disordered. Thr2 carries the post-translational modification N-acetylthreonine; in Band 4.1-like protein 3, N-terminally processed. The span at 20-32 (QEAAGAQGRAGAP) shows a compositional bias: low complexity. Ser88 carries the post-translational modification Phosphoserine. In terms of domain architecture, FERM spans 110 to 391 (MQCKVILLDG…EHHTFFRLLL (282 aa)). Positions 394-513 (APPKKFLTLG…PGLGTDSCPL (120 aa)) are hydrophilic. Residues Ser420, Ser443, and Ser460 each carry the phosphoserine modification. Residues 459 to 469 (ISQTNLITTVT) show a composition bias toward polar residues. 4 disordered regions span residues 459–529 (ISQT…TELR), 541–563 (GYEPSRAEHLPGEPALDSDGPGR), 675–715 (SASL…EDAE), and 937–965 (SETLEQKPHFESSTVKTETISFGSVSPGG). Residues Thr469 and Thr492 each carry the phosphothreonine modification. The interval 514–860 (SPPSTHCAPT…VVQETVLVEE (347 aa)) is spectrin--actin-binding. Residues 516-526 (PSTHCAPTSPT) are compositionally biased toward polar residues. The segment covering 681 to 691 (DPSDSSEEETD) has biased composition (acidic residues). Over residues 698–707 (AADGETTATE) the composition is skewed to low complexity. Thr706 is modified (phosphothreonine). Residues Ser708, Ser960, and Ser962 each carry the phosphoserine modification. A C-terminal (CTD) region spans residues 861–1083 (RRVVHASGDA…VHKETEITPE (223 aa)). Residues 947–960 (ESSTVKTETISFGS) are compositionally biased toward polar residues. Phosphothreonine is present on Thr1081.

In terms of assembly, interacts (via FERM domain) with CADM1. Interacts (via FERM domain) with PRMT3; the interaction is direct and inhibits the protein-arginine N-methyltransferase activity of PRMT3. Interacts with PRMT5. Interacts with PRMT6. As to expression, expressed at high levels in brain, with lower levels in kidney, intestine, and testis. Detected in lung.

It is found in the cytoplasm. The protein resides in the cytoskeleton. It localises to the cell junction. Its subcellular location is the cell membrane. Functionally, tumor suppressor that inhibits cell proliferation and promotes apoptosis. Modulates the activity of protein arginine N-methyltransferases, including PRMT3 and PRMT5. The sequence is that of Band 4.1-like protein 3 from Homo sapiens (Human).